A 535-amino-acid polypeptide reads, in one-letter code: MASELSSAPVLSTPDDHILEVPAADSIPTSTLSDDALRTTYEIVRTADEIRAGGWKRIGLQFPDFMLVDAPRVVEALSKEINTHDQEEAKPERRIYVLADSSYSACCVDEIAAEHVSADVVVHYGRTCLSPTSHLPAIYVYTTHDLDYEVTINEIKKEFSDKTVKLVIMADLTYQNHVDKVVSLLKEQGYNDAVSTEVTRDPAALIPNRKILSDETHDDEHWKAYSIIHISDPPSALLLALYTRFASLHVLSTPSPALENPTMRTAGLLRRRFAKVLALASAGVIGILVNTLSVANYLSSINTLRERIARADKKSYTIVVGKLNPAKLANFAEIEGWVVVGCWESGLIEDDAGYWRPVITPFELEVALMSEEERVWGGEWWGGIEKLGLNDKPEDASKESEGAVAEEEVEFEDVAGGVEGEESAPPEFDMRTGKLISSSRPMRLPVRKNPSTTAETEANSDGQPTSTQQNDSLIKRSVGELASINGVASPGAEFLRSGRTWQGLGTDFDNEASTLVEEGRSGVARGYEVGESGRH.

The [4Fe-4S] cluster site is built by cysteine 107, cysteine 128, and cysteine 342. Residues 390-401 (NDKPEDASKESE) show a composition bias toward basic and acidic residues. Disordered regions lie at residues 390–471 (NDKP…QQND) and 512–535 (ASTLVEEGRSGVARGYEVGESGRH). The segment covering 404-424 (VAEEEVEFEDVAGGVEGEESA) has biased composition (acidic residues). The span at 449 to 471 (NPSTTAETEANSDGQPTSTQQND) shows a compositional bias: polar residues.

It belongs to the DPH1/DPH2 family. DPH2 subfamily. Component of the 2-(3-amino-3-carboxypropyl)histidine synthase complex composed of DPH1, DPH2, DPH3 and a NADH-dependent reductase, predominantly CBR1. [4Fe-4S] cluster is required as a cofactor.

It localises to the cytoplasm. It participates in protein modification; peptidyl-diphthamide biosynthesis. Required for the first step of diphthamide biosynthesis, a post-translational modification of histidine which occurs in elongation factor 2. DPH1 and DPH2 transfer a 3-amino-3-carboxypropyl (ACP) group from S-adenosyl-L-methionine (SAM) to a histidine residue, the reaction is assisted by a reduction system comprising DPH3 and a NADH-dependent reductase, predominantly CBR1. Facilitates the reduction of the catalytic iron-sulfur cluster found in the DPH1 subunit. The protein is 2-(3-amino-3-carboxypropyl)histidine synthase subunit 2 (DPH2) of Gibberella zeae (strain ATCC MYA-4620 / CBS 123657 / FGSC 9075 / NRRL 31084 / PH-1) (Wheat head blight fungus).